A 3075-amino-acid chain; its full sequence is Probable polyketide synthase 30 (3075 aa).

The region spanning 26 to 458 (SGDVAVIGIG…GSNVCLILSE (433 aa)) is the Ketosynthase family 3 (KS3) domain. Catalysis depends on for beta-ketoacyl synthase activity residues Cys198, His337, and His381. Positions 663-696 (GVSADIIIGHSLGEVSSPYCSGMIDFQTLCYLTY) are acyl/malonyl transferase. The For acyl/malonyl transferase activity role is filled by Ser673. Residues 963 to 1085 (GPSINNLGNN…GNFSLTKHNS (123 aa)) are N-terminal hotdog fold. A PKS/mFAS DH domain is found at 963-1269 (GPSINNLGNN…CALVSLGSNP (307 aa)). Catalysis depends on His997, which acts as the Proton acceptor; for dehydratase activity. Residues 1102 to 1269 (NFTSMSKQDF…CALVSLGSNP (168 aa)) are C-terminal hotdog fold. The Proton donor; for dehydratase activity role is filled by Asp1174. The Carrier domain maps to 2533–2610 (DNNEIIRSTI…QSIEIIKSAH (78 aa)). The residue at position 2570 (Ser2570) is an O-(pantetheine 4'-phosphoryl)serine.

It depends on pantetheine 4'-phosphate as a cofactor.

Its function is as follows. Probable polyketide synthase. May be involved in the process of cell migration. The chain is Probable polyketide synthase 30 (pks30) from Dictyostelium discoideum (Social amoeba).